A 93-amino-acid polypeptide reads, in one-letter code: Putative defensin-like protein 282 (93 aa).

Positions 1 to 25 (MANATSFIALAYLLASALMTTVVLG) are cleaved as a signal peptide. Intrachain disulfides connect C51/C83, C66/C90, and C72/C92.

The protein belongs to the DEFL family.

It localises to the secreted. The polypeptide is Putative defensin-like protein 282 (Arabidopsis thaliana (Mouse-ear cress)).